A 455-amino-acid polypeptide reads, in one-letter code: Glycosyl hydrolase family 109 protein (455 aa).

The tat-type signal signal peptide spans 1 to 33; sequence MAGIDRRGFLKASMASVAAAALAGCASQQGTSA. NAD(+) is bound by residues 62–63, aspartate 84, glutamine 112, 133–136, 153–154, and asparagine 182; these read ER, WALH, and EV. Residues tyrosine 211, arginine 230, 242-245, and tyrosine 324 contribute to the substrate site; that span reads YPTH. An NAD(+)-binding site is contributed by tyrosine 242.

It belongs to the Gfo/Idh/MocA family. Glycosyl hydrolase 109 subfamily. Requires NAD(+) as cofactor. In terms of processing, predicted to be exported by the Tat system. The position of the signal peptide cleavage has not been experimentally proven.

Its function is as follows. Glycosidase. This Shewanella amazonensis (strain ATCC BAA-1098 / SB2B) protein is Glycosyl hydrolase family 109 protein.